We begin with the raw amino-acid sequence, 350 residues long: UBX domain-containing protein 2B (350 aa).

The span at 1 to 29 (MEERENSEEGDDGAGEEEEEDQGSGEDGG) shows a compositional bias: acidic residues. The segment at 1–46 (MEERENSEEGDDGAGEEEEEDQGSGEDGGEVGAEREQEAELKDSLR) is disordered. Residues 32–45 (GAEREQEAELKDSL) are compositionally biased toward basic and acidic residues. In terms of domain architecture, SEP spans 160 to 225 (EIQILLKLWS…MEDHQDQEYI (66 aa)). A UBX domain is found at 271–348 (EHVPTTKIQI…DILNTVILQR (78 aa)).

Belongs to the NSFL1C family.

It is found in the nucleus. The protein localises to the cytoplasm. The protein resides in the cytosol. It localises to the endoplasmic reticulum. Its subcellular location is the golgi apparatus. It is found in the cytoskeleton. The protein localises to the microtubule organizing center. The protein resides in the centrosome. Its function is as follows. Adapter protein required for Golgi and endoplasmic reticulum biogenesis. Involved in Golgi and endoplasmic reticulum maintenance during interphase and in their reassembly at the end of mitosis. Regulates the centrosomal levels of kinase aurka-a/Aurora A during mitotic progression by promoting aurka-a removal from centrosomes in prophase. Also, regulates spindle orientation during mitosis. In Xenopus laevis (African clawed frog), this protein is UBX domain-containing protein 2B (ubxn2b).